An 82-amino-acid polypeptide reads, in one-letter code: Small ribosomal subunit protein eS21 (82 aa).

This sequence belongs to the eukaryotic ribosomal protein eS21 family.

This is Small ribosomal subunit protein eS21 (RPS21) from Oryza sativa subsp. japonica (Rice).